The sequence spans 784 residues: Toll-like receptor 2 (784 aa).

A signal peptide spans 1–20 (MPHTLWMVWVLGVIISLSKE). Residues 21-588 (ESSNQASLSC…RLSVSECHRT (568 aa)) are Extracellular-facing. A disulfide bridge links cysteine 30 with cysteine 36. LRR repeat units lie at residues 54–77 (VKSL…RCVN), 78–101 (LQAL…SLGS), 102–125 (LEHL…PLSS), 126–150 (LTFL…HLTK), 151–175 (LQIL…GLTF), 176–199 (LEEL…SIQN), 200–223 (VSHL…VTSS), 224–250 (VECL…TNSL), 251–278 (IKKF…QISG), 279–308 (LLEL…DPGK), 309–337 (VETL…LTER), 338–361 (VKRI…HLKS), 362–388 (LEYL…AWPS), 389–414 (LQTL…TLKN), 415–437 (LTNI…WPEK), 438–457 (MKYL…CIPK), 458–478 (TLEI…NLPQ), 479–500 (LKEL…LLPM), and 501–524 (LLVL…SFHT). N-linked (GlcNAc...) asparagine glycosylation is present at asparagine 114. A glycan (N-linked (GlcNAc...) asparagine) is linked at asparagine 199. A disulfide bridge links cysteine 353 with cysteine 382. An N-linked (GlcNAc...) asparagine glycan is attached at asparagine 414. Residues cysteine 432 and cysteine 454 are joined by a disulfide bond. Asparagine 442 carries an N-linked (GlcNAc...) asparagine glycan. An LRRCT domain is found at 525–579 (LKTLEAGGNNFICSCEFLSFTQEQQALAKVLIDWPANYLCDSPSHVRGQQVQDVR). A helical transmembrane segment spans residues 589–609 (ALVSGMCCALFLLILLTGVLC). Residues 610 to 784 (HRFHGLWYMK…WVNLRAAIKS (175 aa)) are Cytoplasmic-facing. In terms of domain architecture, TIR spans 639 to 782 (ICYDAFVSYS…GFWVNLRAAI (144 aa)). A Glycyl lysine isopeptide (Lys-Gly) (interchain with G-Cter in ubiquitin) cross-link involves residue lysine 754. The short motif at 761 to 778 (YLEWPMDEAQREGFWVNL) is the ATG16L1-binding motif element.

The protein belongs to the Toll-like receptor family. As to quaternary structure, interacts with LY96, TLR1 and TLR6 (via extracellular domain). TLR2 seems to exist in heterodimers with either TLR1 or TLR6 before stimulation by the ligand. The heterodimers form bigger oligomers in response to their corresponding ligands as well as further heterotypic associations with other receptors such as CD14 and/or CD36. Binds MYD88 (via TIR domain). Interacts with TICAM1. Interacts with CNPY3. Interacts with ATG16L1. Interacts with PPP1R11. Interacts with TICAM2. Interacts with TIRAP. In terms of assembly, (Microbial infection) Interacts with M.tuberculosis EsxA. (Microbial infection) Interacts with M.bovis MPB83. As to quaternary structure, (Microbial infection) Interacts with Staphylococcus aureus protein SSL5. In terms of processing, glycosylation of Asn-442 is critical for secretion of the N-terminal ectodomain of TLR2. Ubiquitinated at Lys-754 by PPP1R11, leading to its degradation. Deubiquitinated by USP2. In terms of tissue distribution, highly expressed in peripheral blood leukocytes, in particular in monocytes, in bone marrow, lymph node and in spleen. Also detected in lung and in fetal liver. Levels are low in other tissues.

Its subcellular location is the membrane. It is found in the cytoplasmic vesicle. The protein localises to the phagosome membrane. The protein resides in the membrane raft. Its function is as follows. Cooperates with LY96 to mediate the innate immune response to bacterial lipoproteins and other microbial cell wall components. Cooperates with TLR1 or TLR6 to mediate the innate immune response to bacterial lipoproteins or lipopeptides. Acts via MYD88 and TRAF6, leading to NF-kappa-B activation, cytokine secretion and the inflammatory response. May also activate immune cells and promote apoptosis in response to the lipid moiety of lipoproteins. Recognizes mycoplasmal macrophage-activating lipopeptide-2kD (MALP-2), soluble tuberculosis factor (STF), phenol-soluble modulin (PSM) and B.burgdorferi outer surface protein A lipoprotein (OspA-L) cooperatively with TLR6. Stimulation of monocytes in vitro with M.tuberculosis PstS1 induces p38 MAPK and ERK1/2 activation primarily via this receptor, but also partially via TLR4. MAPK activation in response to bacterial peptidoglycan also occurs via this receptor. Acts as a receptor for M.tuberculosis lipoproteins LprA, LprG, LpqH and PstS1, some lipoproteins are dependent on other coreceptors (TLR1, CD14 and/or CD36); the lipoproteins act as agonists to modulate antigen presenting cell functions in response to the pathogen. M.tuberculosis HSP70 (dnaK) but not HSP65 (groEL-2) acts via this protein to stimulate NF-kappa-B expression. Recognizes M.tuberculosis major T-antigen EsxA (ESAT-6) which inhibits downstream MYD88-dependent signaling (shown in mouse). Forms activation clusters composed of several receptors depending on the ligand, these clusters trigger signaling from the cell surface and subsequently are targeted to the Golgi in a lipid-raft dependent pathway. Forms the cluster TLR2:TLR6:CD14:CD36 in response to diacylated lipopeptides and TLR2:TLR1:CD14 in response to triacylated lipopeptides. Required for normal uptake of M.tuberculosis, a process that is inhibited by M.tuberculosis LppM. This chain is Toll-like receptor 2, found in Homo sapiens (Human).